The chain runs to 93 residues: Small ribosomal subunit protein uS19 (93 aa).

It belongs to the universal ribosomal protein uS19 family.

Protein S19 forms a complex with S13 that binds strongly to the 16S ribosomal RNA. The sequence is that of Small ribosomal subunit protein uS19 from Mycolicibacterium smegmatis (strain ATCC 700084 / mc(2)155) (Mycobacterium smegmatis).